Reading from the N-terminus, the 297-residue chain is MLIFQAFIQSPGETFLNLGFLTIRWYGFLISVSVIIGLFVSKKLAKARNINPLYISEILPSLIIFSIIGARAYYVIFEWRQYSGENLFTSLELFNNTIQIPSFLAVWEGGIAIHGGLIGGLLSIIYFCKSKNIHLKTFIDILIPSIILGQSIGRWGNFFNNEAFGVPTNLPWKLFIPIQNRPLEFINYEFFHPTFLYESLWNFLIFILLIFVFNKQNKTDFFRPGFISCLYLISYSFGRFWIEGLRTDPLCIGGLPPFCSGGIRMAQFISIFLFSSGLIGIFFLRLRTYSCKNRKNG.

The next 4 helical transmembrane spans lie at 20 to 40 (FLTIRWYGFLISVSVIIGLFV), 50 to 70 (INPLYISEILPSLIIFSIIGA), 105 to 125 (AVWEGGIAIHGGLIGGLLSII), and 133 to 153 (IHLKTFIDILIPSIILGQSIG). Arg-154 is a binding site for a 1,2-diacyl-sn-glycero-3-phospho-(1'-sn-glycerol). 3 helical membrane-spanning segments follow: residues 193–213 (PTFLYESLWNFLIFILLIFVF), 225–245 (GFISCLYLISYSFGRFWIEGL), and 266–286 (AQFISIFLFSSGLIGIFFLRL).

It belongs to the Lgt family.

It localises to the cell inner membrane. The enzyme catalyses L-cysteinyl-[prolipoprotein] + a 1,2-diacyl-sn-glycero-3-phospho-(1'-sn-glycerol) = an S-1,2-diacyl-sn-glyceryl-L-cysteinyl-[prolipoprotein] + sn-glycerol 1-phosphate + H(+). Its pathway is protein modification; lipoprotein biosynthesis (diacylglyceryl transfer). Its function is as follows. Catalyzes the transfer of the diacylglyceryl group from phosphatidylglycerol to the sulfhydryl group of the N-terminal cysteine of a prolipoprotein, the first step in the formation of mature lipoproteins. The sequence is that of Phosphatidylglycerol--prolipoprotein diacylglyceryl transferase from Prochlorococcus marinus (strain MIT 9312).